A 75-amino-acid chain; its full sequence is SPbeta prophage-derived uncharacterized protein YomT (75 aa).

The chain is SPbeta prophage-derived uncharacterized protein YomT (yomT) from Bacillus subtilis (strain 168).